The sequence spans 128 residues: Mediator of RNA polymerase II transcription subunit 31-A (128 aa).

Belongs to the Mediator complex subunit 31 family. As to quaternary structure, component of the Mediator complex.

It is found in the nucleus. In terms of biological role, component of the Mediator complex, a coactivator involved in the regulated transcription of nearly all RNA polymerase II-dependent genes. Mediator functions as a bridge to convey information from gene-specific regulatory proteins to the basal RNA polymerase II transcription machinery. Mediator is recruited to promoters by direct interactions with regulatory proteins and serves as a scaffold for the assembly of a functional preinitiation complex with RNA polymerase II and the general transcription factors. The chain is Mediator of RNA polymerase II transcription subunit 31-A (med31-a) from Xenopus laevis (African clawed frog).